A 505-amino-acid chain; its full sequence is Maturase K (505 aa).

This sequence belongs to the intron maturase 2 family. MatK subfamily.

It is found in the plastid. Its subcellular location is the chloroplast. Usually encoded in the trnK tRNA gene intron. Probably assists in splicing its own and other chloroplast group II introns. This Phaulothamnus spinescens (Snake-eyes) protein is Maturase K.